A 99-amino-acid polypeptide reads, in one-letter code: CLAVATA3/ESR (CLE)-related protein 41 (99 aa).

Residues Met-1–Thr-34 form the signal peptide. The tract at residues Ala-60–Asn-99 is disordered. Over residues Ala-70–Arg-79 the composition is skewed to basic residues. Positions Arg-80–Glu-89 are enriched in basic and acidic residues. 2 positions are modified to hydroxyproline: Pro-91 and Pro-94. Pro-94 is a glycosylation site (O-linked (Ara...) hydroxyproline).

The protein belongs to the CLV3/ESR signal peptide family. In terms of assembly, CLE41p interacts specifically with the leucine-rich repeat receptor-like protein kinase TDR. The O-glycosylation (arabinosylation) of the hydroxyproline Pro-94 enhances binding affinity of the CLE41p peptide for its receptor. As to expression, mostly expressed in inflorescence and roots, and, to a lower extent, in seedlings, flowers, leaves and siliques. Observed along the vascular strands in cotyledons, leaves and roots, but not in shoot apical meristems (SAM). Restricted to the phloem and the neighboring pericycle cells in the roots and hypocotyls.

The protein localises to the secreted. It is found in the extracellular space. Functionally, extracellular signal peptide that regulates cell fate. May act with TDR as a ligand-receptor pair in a signal transduction pathway that represses tracheary element differentiation but promotes the formation of procambial cells adjacent to phloem cells in the veins in an auxin-dependent manner. Regulates the transition of protophloem cells from proliferation to differentiation, thus impinging on postembryonic growth capacity of the root meristem; this signaling pathway requires CRN and CLV2. The protein is CLAVATA3/ESR (CLE)-related protein 41 of Arabidopsis thaliana (Mouse-ear cress).